Here is a 610-residue protein sequence, read N- to C-terminus: UvrABC system protein C (610 aa).

The region spanning 16 to 94 (SQPGVYRMYD…IKLYQPRYNV (79 aa)) is the GIY-YIG domain. The region spanning 204-239 (DQVLTQLIARMEKASQDLAFEEAARIRDQIQAVRRV) is the UVR domain.

The protein belongs to the UvrC family. Interacts with UvrB in an incision complex.

Its subcellular location is the cytoplasm. The UvrABC repair system catalyzes the recognition and processing of DNA lesions. UvrC both incises the 5' and 3' sides of the lesion. The N-terminal half is responsible for the 3' incision and the C-terminal half is responsible for the 5' incision. In Salmonella paratyphi A (strain ATCC 9150 / SARB42), this protein is UvrABC system protein C.